Here is a 424-residue protein sequence, read N- to C-terminus: Protein maelstrom 1 (424 aa).

The HMG box DNA-binding region spans 2 to 69 (PPKKHSGFMM…LTRVKKERLN (68 aa)).

The protein belongs to the maelstrom family.

Its subcellular location is the cytoplasm. The protein resides in the nucleus. Involved both in the piRNA and miRNA metabolic processes. As a component of the meiotic nuage, plays a central role during oogenesis by repressing transposable elements and preventing their mobilization, which is essential for the germline integrity. Repression of transposable elements is mediated via the piRNA metabolic process, which mediates the repression of transposable elements during meiosis by forming complexes composed of piRNAs and Piwi proteins and governs the repression of transposons. As a nuclear component, it is required for proper differentiation in the germline stem cell (GSC) lineage by repressing microRNA-7 (miR-7), thereby acting as an indirect regulator of bag-of-marbles (Bam). Acts by binding to the promoter of miR-7 gene and repressing its expression; miR-7 repression alleviates the Bam repression by miR-7, thereby allowing differentiation in the germline stem cell (GSC) lineage. The polypeptide is Protein maelstrom 1 (mael1) (Drosophila ananassae (Fruit fly)).